Here is a 272-residue protein sequence, read N- to C-terminus: Formamidopyrimidine-DNA glycosylase (272 aa).

Pro-2 serves as the catalytic Schiff-base intermediate with DNA. The Proton donor role is filled by Glu-3. Lys-58 functions as the Proton donor; for beta-elimination activity in the catalytic mechanism. Residues His-92, Arg-111, and Arg-153 each coordinate DNA. The segment at 238 to 272 (NVYGRGGEPCPVCAKPLTEKPLSQRTTVYCTHCQN) adopts an FPG-type zinc-finger fold. Arg-262 functions as the Proton donor; for delta-elimination activity in the catalytic mechanism.

It belongs to the FPG family. Monomer. It depends on Zn(2+) as a cofactor.

It catalyses the reaction Hydrolysis of DNA containing ring-opened 7-methylguanine residues, releasing 2,6-diamino-4-hydroxy-5-(N-methyl)formamidopyrimidine.. It carries out the reaction 2'-deoxyribonucleotide-(2'-deoxyribose 5'-phosphate)-2'-deoxyribonucleotide-DNA = a 3'-end 2'-deoxyribonucleotide-(2,3-dehydro-2,3-deoxyribose 5'-phosphate)-DNA + a 5'-end 5'-phospho-2'-deoxyribonucleoside-DNA + H(+). Functionally, involved in base excision repair of DNA damaged by oxidation or by mutagenic agents. Acts as a DNA glycosylase that recognizes and removes damaged bases. Has a preference for oxidized purines, such as 7,8-dihydro-8-oxoguanine (8-oxoG). Has AP (apurinic/apyrimidinic) lyase activity and introduces nicks in the DNA strand. Cleaves the DNA backbone by beta-delta elimination to generate a single-strand break at the site of the removed base with both 3'- and 5'-phosphates. The protein is Formamidopyrimidine-DNA glycosylase of Teredinibacter turnerae (strain ATCC 39867 / T7901).